Consider the following 390-residue polypeptide: GTPase Obg (390 aa).

In terms of domain architecture, Obg spans 1 to 159; the sequence is MKFVDEASVK…RELRLELLLL (159 aa). Residues 160-333 enclose the OBG-type G domain; it reads ADVGMLGLPN…LCFKLGEFME (174 aa). Residues 166–173, 191–195, 213–216, 283–286, and 314–316 contribute to the GTP site; these read GLPNAGKS, FTTLI, DIPG, NKVD, and SAV. Mg(2+) is bound by residues S173 and T193.

Belongs to the TRAFAC class OBG-HflX-like GTPase superfamily. OBG GTPase family. In terms of assembly, monomer. Mg(2+) serves as cofactor.

It is found in the cytoplasm. Its function is as follows. An essential GTPase which binds GTP, GDP and possibly (p)ppGpp with moderate affinity, with high nucleotide exchange rates and a fairly low GTP hydrolysis rate. Plays a role in control of the cell cycle, stress response, ribosome biogenesis and in those bacteria that undergo differentiation, in morphogenesis control. This Vibrio atlanticus (strain LGP32) (Vibrio splendidus (strain Mel32)) protein is GTPase Obg.